Reading from the N-terminus, the 285-residue chain is UPF0354 protein SA1564 (285 aa).

Belongs to the UPF0354 family.

The polypeptide is UPF0354 protein SA1564 (Staphylococcus aureus (strain N315)).